Consider the following 613-residue polypeptide: MTPPPASAWTRSKPPLLRFLDTCLNEFSAETSGAVADYIPELGNADPAYFGISLATLDGHVYEVGDSRVPFTIQSMSKPFVFALALDLLGAGRVESAIGVEPSGDPFNSIRLNSDNHPFNPMVNAGAIACTGLIYDSKGAEAFEQIRLALSRFAGRDLAVDEAVYSSESQTGDRNRAIGYLLKTNAVISDNVAAVLDVYFRQCAVLVTARDIAVMAATLANRGINPVTGEQVMSAYAISRTLSVMTSSGMYDYAGEWIYRIGIPAKSGVGGGILAALPARLGLGSYSPKLDKHGNSVRGIKVCEALSSHYDLHMLNRSDDARNAVIADYDIGKSPSRRVRRAQEREILAAHEQEVRIIELVGTLSLSAVDYVSRRLAGRPRPQFVIFDLHRVTSTTRAGARLVAEAFEELAALNVTVVLSGVRRASKEWNTLREWTAELKNVRDFYLLDTAIEWAEDQIVYRYGGSIDFHETTELAEQPLLEGLSADELAELGAICTIRTYQSGAKILTTGDPADALFFLRSGAVHVTLPDGVRLATLTAGMAFGEMALLEQTRSADVFADMAATAFEAPLKDFERFREQHPRASERIMRNLAQLLADRLIVANAKVDILTST.

The glutaminase stretch occupies residues 33–315 (GAVADYIPEL…LSSHYDLHML (283 aa)). 7 residues coordinate substrate: Ser75, Asn124, Glu168, Asn175, Tyr199, Tyr251, and Val269. The region spanning 345 to 457 (REILAAHEQE…LDTAIEWAED (113 aa)) is the STAS domain. 480–595 (LLEGLSADEL…ERIMRNLAQL (116 aa)) provides a ligand contact to a nucleoside 3',5'-cyclic phosphate.

It belongs to the glutaminase family. In terms of assembly, homotetramer.

The catalysed reaction is L-glutamine + H2O = L-glutamate + NH4(+). In Bradyrhizobium diazoefficiens (strain JCM 10833 / BCRC 13528 / IAM 13628 / NBRC 14792 / USDA 110), this protein is Glutaminase 1 (glsA1).